We begin with the raw amino-acid sequence, 1262 residues long: MQKAIRLNDGHVVTLGLLAQKDGTRKGYLSKRSADNPKWQTKWFALLQNLLFYFESDSSPRPSGLYLLEGSICKRAPSPKRGTSSKESGEKQQHYFTVNFSNDSQKTLELRTEDAKDCDEWVAAIARASYKILATEHEALMQKYLHLLQVVETEKTVAKQLRQQLEDGEVEIERLKTEVTITNLIKDNDRIQSSNKAGSADDEDSDIKKIKKVQSFLRGWLCRRKWKNIIQDYIRSPHADSMRKRNQVVFSMLEAEAEYVQQLHILVNNFLRPLRMAASSKKPPITHDDVSSIFLNSETIMFLHQIFYQGLKARISSWPTLVLADLFDILLPMLNIYQEFVRNHQYSLQILAHCKQNRDFDKLLKQYEAKPDCEERTLETFLTYPMFQIPRYILTLHELLAHTPHEHVERNSLDYAKSKLEELSRIMHDEVSETENIRKNLAIERMITEGCEILLDTSQTFVRQGSLMQMSLSEKSKSSRGRLGSLSTKKEGERQCFLFSKHLIICTRGSGGKLHLTKNGVISLIDCTLLDEPENLDDEAKGAGPEIEHLEFKIGVEPKDSLPFTVILVASTRQEKAAWTSDIIQCVDNIRCNGLMMNAFEENSKVTVPQMIKSDASLYCDDVDIRFSKTMNSCKVLQIRYASVERLLERLTDLRFLSIDFLNTFLHSYRVFTNAMVVLDKLINIYRKPMSAIPARSLELLFSSSHNAKLLYGDAPKSPRASRKFSSPPPLAIGTSSPSRRRKLSLNIPIITGGKALELASLGCSSDSYANIHSPISPFGKTTLDTGKLCMASSLPKTPEEIDVPATIPEKPGELSASRKHSSDVLKEESEDDQNHSDEDNTEVSPVKSPPTPKSFLNRTITEFPFFNYNNGILMTTCRDLVDNNRSTLSATSAFAIATAGANEGPSNKEVFRRMSLANTGFSSDQRNIDKEFVIRRAATNRVLNVLRHWVTKHTQDFDTDDTLKYRVICFLEEVMHDPDLLTQERKAAANIIRTLTLEETTEQHSMLEEVILMTEGVKTEPFENHPALEIAEQLTLLDHLVFKSIPYEEFFGQGWMKAEKYERTPYIMKTTKHFNHVSNFIASEIIRNEDISARASAIEKWVAVADICRCLHNYNAVLEITSSINRSAIFRLKKTWLKVSKQTKSLLDKLQKLVSSDGRFKNLRESLRNCDPPCVPYLGMYLTDLVFIEEGTPNYTEDGLVNFSKMRMISHIIREIRQFQQTTYKIDPQPKVIQYLLDESFMLDEESLYESSLLIEPKLPT.

Residues 22-130 (DGTRKGYLSK…WVAAIARASY (109 aa)) form the PH 1 domain. A Phosphoserine; by PLK2 modification is found at serine 71. One can recognise an IQ domain in the interval 208–233 (KKIKKVQSFLRGWLCRRKWKNIIQDY). The DH domain occupies 244 to 430 (KRNQVVFSML…EELSRIMHDE (187 aa)). Residues 460 to 588 (TFVRQGSLMQ…WTSDIIQCVD (129 aa)) enclose the PH 2 domain. Residues serine 581 and serine 617 each carry the phosphoserine; by PLK2 modification. The region spanning 635–749 (KVLQIRYASV…RRRKLSLNIP (115 aa)) is the N-terminal Ras-GEF domain. Residues 714–738 (DAPKSPRASRKFSSPPPLAIGTSSP) form a disordered region. Position 745 is a phosphoserine (serine 745). Serine 766 is modified (phosphoserine; by PLK2). Residues 800-854 (EEIDVPATIPEKPGELSASRKHSSDVLKEESEDDQNHSDEDNTEVSPVKSPPTPK) form a disordered region. Residues 821–839 (HSSDVLKEESEDDQNHSDE) show a composition bias toward basic and acidic residues. One can recognise a Ras-GEF domain in the interval 1027 to 1259 (PALEIAEQLT…YESSLLIEPK (233 aa)).

In terms of assembly, homooligomer and heterooligomer with RASGRF2. Interacts with USP8, thereby regulating its stability. In terms of processing, phosphorylated by PLK2, leading to ubiquitination and degradation by the proteasome. Ubiquitinated and degraded following phosphorylation by PLK2. Post-translationally, phosphorylated by SRC and LCK. Phosphorylation by LCK increases its capacity to stimulate the GDP/GTP exchange on Ras, whereas its phosphorylation by SRC seems not to have an effect on stimulation activity. As to expression, brain.

Promotes the exchange of Ras-bound GDP by GTP. This Mus musculus (Mouse) protein is Ras-specific guanine nucleotide-releasing factor 1 (Rasgrf1).